We begin with the raw amino-acid sequence, 535 residues long: Glucans biosynthesis protein D 1 (535 aa).

The segment at residues 1-28 is a signal peptide (tat-type signal); sequence MHRRDLLKQLAAGFLALAPGLTPSTASA. The segment at 275-287 is insert; that stretch reads RTDRAGDRQSAAR.

This sequence belongs to the OpgD/OpgG family. Predicted to be exported by the Tat system. The position of the signal peptide cleavage has not been experimentally proven.

The protein localises to the periplasm. It participates in glycan metabolism; osmoregulated periplasmic glucan (OPG) biosynthesis. Its function is as follows. Probably involved in the control of the structural glucose backbone of osmoregulated periplasmic glucans (OPGs). The chain is Glucans biosynthesis protein D 1 (opgD1) from Ralstonia nicotianae (strain ATCC BAA-1114 / GMI1000) (Ralstonia solanacearum).